Reading from the N-terminus, the 820-residue chain is Probable ATP-dependent RNA helicase DDX23 (820 aa).

Basic and acidic residues predominate over residues 1 to 42 (MAGELADKKDRDASPSKEERKRSRTPDRERDRDRDRKSSPSK). Residues 1–244 (MAGELADKKD…QKIREEKDKS (244 aa)) are disordered. Ser14 and Ser16 each carry phosphoserine. Basic residues predominate over residues 43–65 (DRKRHRSRDRRRGGSRSRSRSRS). The segment covering 66-105 (KSAERERRHKERERDKERDRNKKDRDRDKDGHRRDKDRKR) has biased composition (basic and acidic residues). Phosphoserine is present on residues Ser107 and Ser109. Basic and acidic residues-rich tracts occupy residues 112-137 (RGKD…DKKP), 147-226 (LLAK…RETN), and 233-244 (GRQKIREEKDKS). The Q motif motif lies at 391-419 (RSWKDSSLPPHILEVIDKCGYKEPTPIQR). The Helicase ATP-binding domain maps to 422–627 (IPIGLQNRDI…RSYLRRPAVV (206 aa)). Residue 435–442 (AETGSGKT) coordinates ATP. The DEAD box motif lies at 549-552 (DEAD). In terms of domain architecture, Helicase C-terminal spans 651–799 (KRKKLLAILE…SCPPELANHP (149 aa)). Residues Lys686 and Lys811 each participate in a glycyl lysine isopeptide (Lys-Gly) (interchain with G-Cter in SUMO2) cross-link.

It belongs to the DEAD box helicase family. DDX23/PRP28 subfamily. In terms of assembly, the phosphorylated form (by SRPK2) is a component of the U4/U6-U5 tri-snRNP complex composed of the U4, U6 and U5 snRNAs and at least PRPF3, PRPF4, PRPF6, PRPF8, PRPF31, SNRNP200, TXNL4A, WDR57, SNRNP40, DDX23, CD2BP2, PPIH, SNU13, EFTUD2, SART1 and USP39. Identified in the spliceosome C complex. Interacts with ERBB4. Interacts with ERCC6. Post-translationally, in vitro phosphorylated by CLK1 and U1 snRNP-associated protein kinase. Phosphorylated by SRPK2 and this phosphorylation is required for its association with the tri-snRNP (U4/U6-U5 tri-small nuclear ribonucleoproteins) and subsequent spliceosomal B complex formation. May be phosphorylated by SRPK2 on Ser residues in the SR domain; the phosphorylation is required for the removal of inappropriate R-loops during transcription.

It localises to the nucleus. Its subcellular location is the chromosome. It carries out the reaction ATP + H2O = ADP + phosphate + H(+). Its function is as follows. Involved in pre-mRNA splicing and its phosphorylated form (by SRPK2) is required for spliceosomal B complex formation. Independently of its spliceosome formation function, required for the suppression of incorrect R-loops formed during transcription; R-loops are composed of a DNA:RNA hybrid and the associated non-template single-stranded DNA. The sequence is that of Probable ATP-dependent RNA helicase DDX23 from Homo sapiens (Human).